The chain runs to 285 residues: Glutamate racemase (285 aa).

Substrate-binding positions include 30–31 and 62–63; these read DS and YG. The Proton donor/acceptor role is filled by Cys94. Residue 95-96 coordinates substrate; the sequence is NT. The active-site Proton donor/acceptor is the Cys206. Position 207–208 (207–208) interacts with substrate; that stretch reads TH.

It belongs to the aspartate/glutamate racemases family.

The catalysed reaction is L-glutamate = D-glutamate. It functions in the pathway cell wall biogenesis; peptidoglycan biosynthesis. Provides the (R)-glutamate required for cell wall biosynthesis. The chain is Glutamate racemase from Pectobacterium carotovorum subsp. carotovorum (strain PC1).